Here is a 129-residue protein sequence, read N- to C-terminus: MSGRGKQGGKARAKAKSRSSRAGLQFPVGRVHRLLRKGNYAERVGAGAPVYLAAVLEYLTAEILELAGNAARDNKKTRIIPRHLQLAIRNDEELNKLLGKVTIAQGGVLPNIQAVLLPKKTDSHKAKAK.

The disordered stretch occupies residues 1–22 (MSGRGKQGGKARAKAKSRSSRA). Residue serine 2 is modified to N-acetylserine. Serine 2 bears the Phosphoserine mark. Lysine 6 is subject to N6-(2-hydroxyisobutyryl)lysine. N6-acetyllysine is present on residues lysine 6 and lysine 10. Positions 7–19 (QGGKARAKAKSRS) are enriched in basic residues. Lysine 10 carries the post-translational modification N6-(2-hydroxyisobutyryl)lysine; alternate. An N6-lactoyllysine; alternate modification is found at lysine 10. Lysine 10 carries the N6-succinyllysine modification. Residues lysine 14 and lysine 16 each participate in a glycyl lysine isopeptide (Lys-Gly) (interchain with G-Cter in ubiquitin) cross-link. Position 37 is an N6-(2-hydroxyisobutyryl)lysine; alternate (lysine 37). N6-(2-hydroxyisobutyryl)lysine is present on residues lysine 75 and lysine 76. Residue lysine 96 is modified to N6-(2-hydroxyisobutyryl)lysine; alternate. Lysine 96 is modified (N6-succinyllysine). Lysine 96 carries the N6-glutaryllysine; alternate modification. Lysine 100 bears the N6-glutaryllysine mark. N5-methylglutamine is present on glutamine 105. The residue at position 119 (lysine 119) is an N6-(2-hydroxyisobutyryl)lysine; alternate. N6-glutaryllysine; alternate occurs at positions 119 and 120. A Glycyl lysine isopeptide (Lys-Gly) (interchain with G-Cter in ubiquitin) cross-link involves residue lysine 120.

It belongs to the histone H2A family. As to quaternary structure, the nucleosome is a histone octamer containing two molecules each of H2A, H2B, H3 and H4 assembled in one H3-H4 heterotetramer and two H2A-H2B heterodimers. The octamer wraps approximately 147 bp of DNA. Post-translationally, monoubiquitination of Lys-120 (H2AK119Ub) gives a specific tag for epigenetic transcriptional repression. Following DNA double-strand breaks (DSBs), it is ubiquitinated through 'Lys-63' linkage of ubiquitin moieties, leading to the recruitment of repair proteins to sites of DNA damage. H2AK119Ub and ionizing radiation-induced 'Lys-63'-linked ubiquitination are distinct events. Phosphorylation on Ser-2 is enhanced during mitosis. Phosphorylation on Ser-2 directly represses transcription. In terms of processing, glutamine methylation at Gln-105 (H2AQ104me) by FBL is specifically dedicated to polymerase I. It is present at 35S ribosomal DNA locus and impairs binding of the FACT complex.

It is found in the nucleus. The protein localises to the chromosome. Core component of nucleosome. Nucleosomes wrap and compact DNA into chromatin, limiting DNA accessibility to the cellular machineries which require DNA as a template. Histones thereby play a central role in transcription regulation, DNA repair, DNA replication and chromosomal stability. DNA accessibility is regulated via a complex set of post-translational modifications of histones, also called histone code, and nucleosome remodeling. The protein is Histone H2A-IV of Gallus gallus (Chicken).